A 986-amino-acid polypeptide reads, in one-letter code: DNA polymerase I (986 aa).

Residues 1–303 (MFMSAKSPLL…RTFIDKIQAF (303 aa)) form the 5'-3' exonuclease domain. The region spanning 304–592 (HRNFSDNQSP…MEDRGIRIDC (289 aa)) is the 3'-5' exonuclease domain. A disordered region spans residues 308 to 327 (SDNQSPVPMGNEADNGEPKK). Residues 593–986 (DYLQTLSQQL…HRGSNWMEAK (394 aa)) form a polymerase region.

It belongs to the DNA polymerase type-A family. Single-chain monomer with multiple functions.

The enzyme catalyses DNA(n) + a 2'-deoxyribonucleoside 5'-triphosphate = DNA(n+1) + diphosphate. Its function is as follows. In addition to polymerase activity, this DNA polymerase exhibits 3'-5' and 5'-3' exonuclease activity. The polypeptide is DNA polymerase I (polA) (Synechocystis sp. (strain ATCC 27184 / PCC 6803 / Kazusa)).